Reading from the N-terminus, the 315-residue chain is Secreted frizzled-related protein 5 (315 aa).

The N-terminal stretch at 1-27 (MRAAAGGARAAVLALLLGALHGAPARG) is a signal peptide. Positions 46–163 (SKPPQCLDIP…PLDNDLCIAV (118 aa)) constitute an FZ domain. Cystine bridges form between Cys-51–Cys-114, Cys-61–Cys-107, Cys-98–Cys-133, Cys-122–Cys-160, Cys-126–Cys-150, Cys-179–Cys-251, Cys-182–Cys-253, and Cys-196–Cys-301. The NTR domain occupies 179 to 301 (CAQCEMEHSA…AVKFMFSYPC (123 aa)).

This sequence belongs to the secreted frizzled-related protein (sFRP) family. In terms of tissue distribution, strongly expressed in the retinal pigment epithelium (RPE). Weak expression in retina, brain, heart, liver, kidney, testis and muscle.

The protein localises to the secreted. In terms of biological role, soluble frizzled-related proteins (sFRPS) function as modulators of Wnt signaling through direct interaction with Wnts. They have a role in regulating cell growth and differentiation in specific cell types. SFRP5 may be involved in determining the polarity of photoreceptor, and perhaps other, cells in the retina. Inhibits Wnt8 signaling, in vitro. The chain is Secreted frizzled-related protein 5 (SFRP5) from Bos taurus (Bovine).